We begin with the raw amino-acid sequence, 161 residues long: Urease accessory protein UreE (161 aa).

The protein belongs to the UreE family. In terms of assembly, homodimer.

It localises to the cytoplasm. Involved in urease metallocenter assembly. Binds nickel. Probably functions as a nickel donor during metallocenter assembly. It is not essential for urease activity. The sequence is that of Urease accessory protein UreE from Proteus mirabilis (strain HI4320).